We begin with the raw amino-acid sequence, 937 residues long: MORC family CW-type zinc finger protein 4 (937 aa).

The CW-type zinc finger occupies K420–L472. Zn(2+) contacts are provided by C429, C432, C453, and C464. The segment at P606 to G637 is disordered. The stretch at K762 to S876 forms a coiled coil.

Expressed at low levels in normal tissues, with highest expression levels in placenta and testis. Expression is significantly increased in subset of diffuse large B-cell lymphomas.

It localises to the nucleus. Its function is as follows. Histone methylation reader which binds to non-methylated (H3K4me0), monomethylated (H3K4me1), dimethylated (H3K4me2) and trimethylated (H3K4me3) 'Lys-4' on histone H3. The order of binding preference is H3K4me3 &gt; H3K4me2 &gt; H3K4me1 &gt; H3K4me0. The protein is MORC family CW-type zinc finger protein 4 (MORC4) of Homo sapiens (Human).